Consider the following 149-residue polypeptide: Large ribosomal subunit protein uL13 (149 aa).

The protein belongs to the universal ribosomal protein uL13 family. In terms of assembly, part of the 50S ribosomal subunit.

Its function is as follows. This protein is one of the early assembly proteins of the 50S ribosomal subunit, although it is not seen to bind rRNA by itself. It is important during the early stages of 50S assembly. This is Large ribosomal subunit protein uL13 from Cyanothece sp. (strain PCC 7425 / ATCC 29141).